The following is a 105-amino-acid chain: Small ribosomal subunit protein uS10 (105 aa).

The protein belongs to the universal ribosomal protein uS10 family. As to quaternary structure, part of the 30S ribosomal subunit.

In terms of biological role, involved in the binding of tRNA to the ribosomes. The sequence is that of Small ribosomal subunit protein uS10 from Anaplasma marginale (strain Florida).